Reading from the N-terminus, the 175-residue chain is Bifunctional protein PyrR (175 aa).

Residues threonine 40–arginine 41, arginine 85, aspartate 102–threonine 110, arginine 135, and valine 159 each bind substrate. Residues valine 98–threonine 110 carry the PRPP-binding motif.

It belongs to the purine/pyrimidine phosphoribosyltransferase family. PyrR subfamily. In terms of assembly, homodimer and homohexamer; in equilibrium.

The catalysed reaction is UMP + diphosphate = 5-phospho-alpha-D-ribose 1-diphosphate + uracil. Regulates transcriptional attenuation of the pyrimidine nucleotide (pyr) operon by binding in a uridine-dependent manner to specific sites on pyr mRNA. This disrupts an antiterminator hairpin in the RNA and favors formation of a downstream transcription terminator, leading to a reduced expression of downstream genes. Functionally, also displays a weak uracil phosphoribosyltransferase activity which is not physiologically significant. This is Bifunctional protein PyrR from Staphylococcus saprophyticus subsp. saprophyticus (strain ATCC 15305 / DSM 20229 / NCIMB 8711 / NCTC 7292 / S-41).